Consider the following 207-residue polypeptide: Ribonuclease HII (207 aa).

Residues 10-199 form the RNase H type-2 domain; it reads RLIAGVDEVG…VRNALLDAEL (190 aa). A divalent metal cation is bound by residues D16, E17, and D108.

This sequence belongs to the RNase HII family. Mn(2+) serves as cofactor. It depends on Mg(2+) as a cofactor.

Its subcellular location is the cytoplasm. The enzyme catalyses Endonucleolytic cleavage to 5'-phosphomonoester.. Endonuclease that specifically degrades the RNA of RNA-DNA hybrids. The sequence is that of Ribonuclease HII from Erwinia tasmaniensis (strain DSM 17950 / CFBP 7177 / CIP 109463 / NCPPB 4357 / Et1/99).